The sequence spans 714 residues: Polyribonucleotide nucleotidyltransferase (714 aa).

D487 and D493 together coordinate Mg(2+). Residues 554-613 (PRIETLKIPTDKIREVIGTGGKVIREIVEKTGAKINIEDDGTVKVASSDGNSIKAAIAWI) form the KH domain. The region spanning 623–691 (GQIYEGTVVK…DRGKVRLSMR (69 aa)) is the S1 motif domain.

It belongs to the polyribonucleotide nucleotidyltransferase family. The cofactor is Mg(2+).

The protein localises to the cytoplasm. It carries out the reaction RNA(n+1) + phosphate = RNA(n) + a ribonucleoside 5'-diphosphate. In terms of biological role, involved in mRNA degradation. Catalyzes the phosphorolysis of single-stranded polyribonucleotides processively in the 3'- to 5'-direction. This chain is Polyribonucleotide nucleotidyltransferase, found in Methylocella silvestris (strain DSM 15510 / CIP 108128 / LMG 27833 / NCIMB 13906 / BL2).